The following is an 836-amino-acid chain: Pentatricopeptide repeat-containing protein At2g39620 (836 aa).

PPR repeat units lie at residues 1–35, 36–62, 63–98, 99–133, 134–164, 165–199, 200–230, 233–263, 264–298, 299–333, 334–364, 365–399, 400–434, 435–465, 466–500, 501–535, 536–566, 568–602, 603–637, 638–668, 669–703, 704–734, and 740–770; these read MPIN…GLKP, HNQL…VRDP, GVVL…GIDP, DKYS…GLES, DVYI…MHVK, DVVT…CVDI, DHVS…VIKK, IFAF…VWRK, DESS…DVRM, NKVA…GLIG, DVSV…IEDR, DVVS…HIKP, NAVT…DIES, ELET…LPIK, DAVA…GVCP, DSRT…GFDS, ECHV…CGFE, STVS…KFQP, NAVT…GFCS, QTPV…ISNK, YIVS…ELKP, DSVS…MGER, and EVEH…MRVK. The interval 775–836 is type E motif; degenerate; the sequence is VWGALLNSSR…KVPACSWIEV (62 aa).

It belongs to the PPR family. PCMP-E subfamily.

The sequence is that of Pentatricopeptide repeat-containing protein At2g39620 (PCMP-E33) from Arabidopsis thaliana (Mouse-ear cress).